Consider the following 229-residue polypeptide: Potassium/proton antiporter CemA (229 aa).

4 consecutive transmembrane segments (helical) span residues F7–F27, M106–L126, I154–I174, and I189–I209.

This sequence belongs to the CemA family.

Its subcellular location is the plastid. The protein localises to the chloroplast inner membrane. The enzyme catalyses K(+)(in) + H(+)(out) = K(+)(out) + H(+)(in). Contributes to K(+)/H(+) antiport activity by supporting proton efflux to control proton extrusion and homeostasis in chloroplasts in a light-dependent manner to modulate photosynthesis. Prevents excessive induction of non-photochemical quenching (NPQ) under continuous-light conditions. Indirectly promotes efficient inorganic carbon uptake into chloroplasts. In Spinacia oleracea (Spinach), this protein is Potassium/proton antiporter CemA.